The chain runs to 286 residues: Bifunctional protein FolD (286 aa).

Residues 163-165 (GMS), I188, and I229 each bind NADP(+).

Belongs to the tetrahydrofolate dehydrogenase/cyclohydrolase family. In terms of assembly, homodimer.

The enzyme catalyses (6R)-5,10-methylene-5,6,7,8-tetrahydrofolate + NADP(+) = (6R)-5,10-methenyltetrahydrofolate + NADPH. It carries out the reaction (6R)-5,10-methenyltetrahydrofolate + H2O = (6R)-10-formyltetrahydrofolate + H(+). It participates in one-carbon metabolism; tetrahydrofolate interconversion. Functionally, catalyzes the oxidation of 5,10-methylenetetrahydrofolate to 5,10-methenyltetrahydrofolate and then the hydrolysis of 5,10-methenyltetrahydrofolate to 10-formyltetrahydrofolate. This is Bifunctional protein FolD from Helicobacter hepaticus (strain ATCC 51449 / 3B1).